The primary structure comprises 426 residues: Proline--tRNA ligase (426 aa).

This sequence belongs to the class-II aminoacyl-tRNA synthetase family. ProS type 2 subfamily. In terms of assembly, homodimer.

Its subcellular location is the cytoplasm. The catalysed reaction is tRNA(Pro) + L-proline + ATP = L-prolyl-tRNA(Pro) + AMP + diphosphate. Functionally, catalyzes the attachment of proline to tRNA(Pro) in a two-step reaction: proline is first activated by ATP to form Pro-AMP and then transferred to the acceptor end of tRNA(Pro). The polypeptide is Proline--tRNA ligase (Rickettsia peacockii (strain Rustic)).